The sequence spans 346 residues: Melanoma-associated antigen B4 (346 aa).

Residues 1-18 are compositionally biased toward basic residues; sequence MPRGQKSKLRAREKRQRT. Positions 1-107 are disordered; the sequence is MPRGQKSKLR…STSTERSLKD (107 aa). Residues 45-54 show a composition bias toward polar residues; sequence VLRDTASSSL. The segment covering 92-101 has biased composition (low complexity); it reads ASSSQASTST. The 199-residue stretch at 109 to 307 folds into the MAGE domain; sequence LTRKTKMLVQ…NNFPLLYEEA (199 aa). Positions 311 to 346 are disordered; that stretch reads EEERAGARPRVAARRGTTAMTSAYSRATSSSSSQPM. Over residues 318–346 the composition is skewed to low complexity; that stretch reads RPRVAARRGTTAMTSAYSRATSSSSSQPM.

Expressed in testis.

The protein localises to the cytoplasm. In Homo sapiens (Human), this protein is Melanoma-associated antigen B4 (MAGEB4).